Consider the following 458-residue polypeptide: MKSNFSKFKDFIKYKKVAVVGIGVSNRPLIKFLVKLGAKVTAFDKKHREKLGSISLELEEIGVDLVLGENYLDKLDGYDVIFKTPSMRIDRPEFVKAKESGAYITSEMEEFIKYCPAKVFGITGSDGKTTTTTLVYEMLKKEGYRTWVGGNIGTPLFANIEEMKEDHMVVLELSSFQLMTMDVSPEISLITNLSPNHLDVHKDFEEYVWAKKNIFKYQSSNNLLVLNKDDDLTNGMENEALGDVLKFSLVEKVYNGACLSNNKLTIQGKEVCDSKDIKLKGRHNIANLLAAFCMVNKYVSIDSMKYVATNFSGVEHRCEFIREVNGIKYYNDSIASSPSRTLAGLNSFEKPVILIAGGYDKKIPFEPLAEGGYDKIKILILMGDTKNKIKSAFEKVISYKKCEMEIVIVNSMEEAVKVADNMAEKGDIITLSPACASFDMYPNFEIRGNEFKNIVNSL.

124-130 (GSDGKTT) is an ATP binding site.

The protein belongs to the MurCDEF family.

It localises to the cytoplasm. The catalysed reaction is UDP-N-acetyl-alpha-D-muramoyl-L-alanine + D-glutamate + ATP = UDP-N-acetyl-alpha-D-muramoyl-L-alanyl-D-glutamate + ADP + phosphate + H(+). It functions in the pathway cell wall biogenesis; peptidoglycan biosynthesis. In terms of biological role, cell wall formation. Catalyzes the addition of glutamate to the nucleotide precursor UDP-N-acetylmuramoyl-L-alanine (UMA). This Clostridium botulinum (strain ATCC 19397 / Type A) protein is UDP-N-acetylmuramoylalanine--D-glutamate ligase.